The following is a 37-amino-acid chain: Large ribosomal subunit protein bL36c (37 aa).

It belongs to the bacterial ribosomal protein bL36 family.

The protein resides in the plastid. The protein localises to the chloroplast. The sequence is that of Large ribosomal subunit protein bL36c (rpl36) from Porphyra purpurea (Red seaweed).